The sequence spans 502 residues: Hexokinase-2 (502 aa).

The helical transmembrane segment at 4–24 (VAVATTVVCSVAVCAAAALIV) threads the bilayer. One can recognise a Hexokinase domain in the interval 35 to 487 (ARVIEILKAF…SGVGAALLAA (453 aa)). The tract at residues 90 to 228 (SGDETGFFYA…GLDMLVAALV (139 aa)) is hexokinase small subdomain. ADP is bound by residues Gly104, Thr105, and Asn106. Residues Thr194, Lys195, Asn229, and Asp230 each coordinate D-glucose. The tract at residues 229 to 476 (NDTIGTLAGG…ESVEVILSND (248 aa)) is hexokinase large subdomain. Thr253 serves as a coordination point for ADP. D-glucose-binding residues include Asn256, Glu284, and Glu315. Residue Gly441 participates in ADP binding.

The protein belongs to the hexokinase family. Highly expressed in siliques, at intermediate levels in roots and flowers, and at lower levels in stems, rosette and cauline leaves.

The protein resides in the mitochondrion outer membrane. It carries out the reaction a D-hexose + ATP = a D-hexose 6-phosphate + ADP + H(+). The catalysed reaction is D-fructose + ATP = D-fructose 6-phosphate + ADP + H(+). The enzyme catalyses D-glucose + ATP = D-glucose 6-phosphate + ADP + H(+). Its pathway is carbohydrate metabolism; hexose metabolism. The protein operates within carbohydrate degradation; glycolysis; D-glyceraldehyde 3-phosphate and glycerone phosphate from D-glucose: step 1/4. Functionally, fructose and glucose phosphorylating enzyme. May be involved in the phosphorylation of glucose during the export from mitochondrion to cytosol. Acts as a sugar sensor which may regulate sugar-dependent gene repression or activation. Mediates the effects of sugar on plant growth and development independently of its catalytic activity or the sugar metabolism. May regulate the execution of program cell death in plant cells. The sequence is that of Hexokinase-2 (HXK2) from Arabidopsis thaliana (Mouse-ear cress).